Consider the following 330-residue polypeptide: Trans-1,2-dihydrobenzene-1,2-diol dehydrogenase (330 aa).

This sequence belongs to the Gfo/Idh/MocA family. Homodimer.

The catalysed reaction is (1R,2R)-1,2-dihydrobenzene-1,2-diol + NADP(+) = catechol + NADPH + H(+). It catalyses the reaction D-xylose + NADP(+) = D-xylono-1,5-lactone + NADPH + H(+). The chain is Trans-1,2-dihydrobenzene-1,2-diol dehydrogenase (dhdh) from Xenopus laevis (African clawed frog).